The primary structure comprises 113 residues: U11-theraphotoxin-Hhn1a (113 aa).

A signal peptide spans methionine 1–alanine 21. A propeptide spanning residues aspartate 22 to arginine 74 is cleaved from the precursor. A compositionally biased stretch (basic and acidic residues) spans leucine 60–asparagine 69. A disordered region spans residues leucine 60–aspartate 83. Cystine bridges form between cysteine 75–cysteine 90, cysteine 82–cysteine 95, and cysteine 89–cysteine 110.

This sequence belongs to the neurotoxin 14 (magi-1) family. 01 (HNTX-16) subfamily. As to expression, expressed by the venom gland.

The protein resides in the secreted. Functionally, probable ion channel inhibitor. This chain is U11-theraphotoxin-Hhn1a, found in Cyriopagopus hainanus (Chinese bird spider).